A 196-amino-acid polypeptide reads, in one-letter code: 7-methyl-GTP pyrophosphatase (196 aa).

The active-site Proton acceptor is Asp69.

This sequence belongs to the Maf family. YceF subfamily. A divalent metal cation serves as cofactor.

Its subcellular location is the cytoplasm. It carries out the reaction N(7)-methyl-GTP + H2O = N(7)-methyl-GMP + diphosphate + H(+). Its function is as follows. Nucleoside triphosphate pyrophosphatase that hydrolyzes 7-methyl-GTP (m(7)GTP). May have a dual role in cell division arrest and in preventing the incorporation of modified nucleotides into cellular nucleic acids. The polypeptide is 7-methyl-GTP pyrophosphatase (Photorhabdus laumondii subsp. laumondii (strain DSM 15139 / CIP 105565 / TT01) (Photorhabdus luminescens subsp. laumondii)).